An 86-amino-acid polypeptide reads, in one-letter code: Acyl carrier protein (86 aa).

The 76-residue stretch at 5–80 (EEILKKVQSI…EAVEFIIDKI (76 aa)) folds into the Carrier domain. S40 bears the O-(pantetheine 4'-phosphoryl)serine mark.

It belongs to the acyl carrier protein (ACP) family. Post-translationally, 4'-phosphopantetheine is transferred from CoA to a specific serine of apo-ACP by AcpS. This modification is essential for activity because fatty acids are bound in thioester linkage to the sulfhydryl of the prosthetic group.

Its subcellular location is the plastid. It is found in the chloroplast. It participates in lipid metabolism; fatty acid biosynthesis. In terms of biological role, carrier of the growing fatty acid chain in fatty acid biosynthesis. The sequence is that of Acyl carrier protein from Cyanidium caldarium (Red alga).